A 180-amino-acid polypeptide reads, in one-letter code: CDP-archaeol synthase (180 aa).

A run of 5 helical transmembrane segments spans residues 5-25, 54-74, 78-98, 118-138, and 142-162; these read LVAT…AAVL, AVGT…AEPA, LGVD…FGAM, AFPG…VFVV, and WALA…TPIL.

The protein belongs to the CDP-archaeol synthase family. The cofactor is Mg(2+).

The protein localises to the cell membrane. It carries out the reaction 2,3-bis-O-(geranylgeranyl)-sn-glycerol 1-phosphate + CTP + H(+) = CDP-2,3-bis-O-(geranylgeranyl)-sn-glycerol + diphosphate. Its pathway is membrane lipid metabolism; glycerophospholipid metabolism. In terms of biological role, catalyzes the formation of CDP-2,3-bis-(O-geranylgeranyl)-sn-glycerol (CDP-archaeol) from 2,3-bis-(O-geranylgeranyl)-sn-glycerol 1-phosphate (DGGGP) and CTP. This reaction is the third ether-bond-formation step in the biosynthesis of archaeal membrane lipids. The polypeptide is CDP-archaeol synthase (Halorubrum lacusprofundi (strain ATCC 49239 / DSM 5036 / JCM 8891 / ACAM 34)).